The chain runs to 278 residues: Extracellular metalloprotease GLRG_06511 (278 aa).

The first 19 residues, 1 to 19 (MQFKSLLVSALAAASTALA), serve as a signal peptide directing secretion. N-linked (GlcNAc...) asparagine glycosylation occurs at Asn-51. His-190 is a binding site for Zn(2+). Residue Glu-191 is part of the active site. His-194 contributes to the Zn(2+) binding site. A disulfide bond links Cys-227 and Cys-254.

This sequence belongs to the peptidase M43B family.

It localises to the secreted. Its function is as follows. Secreted metalloproteinase that allows assimilation of proteinaceous substrates. This Colletotrichum graminicola (strain M1.001 / M2 / FGSC 10212) (Maize anthracnose fungus) protein is Extracellular metalloprotease GLRG_06511.